The primary structure comprises 415 residues: Glutamate-1-semialdehyde 2,1-aminomutase (415 aa).

Lys260 is subject to N6-(pyridoxal phosphate)lysine.

The protein belongs to the class-III pyridoxal-phosphate-dependent aminotransferase family. HemL subfamily. Pyridoxal 5'-phosphate serves as cofactor.

The protein localises to the cytoplasm. The enzyme catalyses (S)-4-amino-5-oxopentanoate = 5-aminolevulinate. The protein operates within porphyrin-containing compound metabolism; protoporphyrin-IX biosynthesis; 5-aminolevulinate from L-glutamyl-tRNA(Glu): step 2/2. The protein is Glutamate-1-semialdehyde 2,1-aminomutase of Methanoculleus marisnigri (strain ATCC 35101 / DSM 1498 / JR1).